A 272-amino-acid polypeptide reads, in one-letter code: Catabolic 3-dehydroquinate dehydratase (272 aa).

Residues 66-68 (EFR) and arginine 102 each bind 3-dehydroquinate. Catalysis depends on histidine 163, which acts as the Proton donor/acceptor. The active-site Schiff-base intermediate with substrate is the lysine 190. 3-dehydroquinate contacts are provided by arginine 232, serine 251, and glutamine 255.

The protein belongs to the type-I 3-dehydroquinase family.

The catalysed reaction is 3-dehydroquinate = 3-dehydroshikimate + H2O. The protein operates within aromatic compound metabolism; 3,4-dihydroxybenzoate biosynthesis; 3,4-dihydroxybenzoate from 3-dehydroquinate: step 1/2. Involved in the biosynthesis of protocatechuate. Catalyzes the catabolic dehydration of 3-dehydroquinate (DHQ) to yield 3-dehydroshikimate. The polypeptide is Catabolic 3-dehydroquinate dehydratase (Acinetobacter baylyi (strain ATCC 33305 / BD413 / ADP1)).